A 250-amino-acid chain; its full sequence is Tumor necrosis factor ligand superfamily member 13 (250 aa).

Positions Met1–Arg104 are excised as a propeptide. Disordered stretches follow at residues Glu61–Ser82 and Asp89–Thr108. The region spanning Ser116–Leu250 is the THD domain. Asn124 is a glycosylation site (N-linked (GlcNAc...) asparagine). The cysteines at positions 196 and 211 are disulfide-linked.

This sequence belongs to the tumor necrosis factor family. Homotrimer. Post-translationally, the precursor is cleaved by furin. In terms of tissue distribution, expressed at high levels in transformed cell lines, cancers of colon, thyroid, lymphoid tissues and specifically expressed in monocytes and macrophages.

The protein localises to the secreted. Functionally, cytokine that binds to TNFRSF13B/TACI and to TNFRSF17/BCMA. Plays a role in the regulation of tumor cell growth. May be involved in monocyte/macrophage-mediated immunological processes. The chain is Tumor necrosis factor ligand superfamily member 13 (TNFSF13) from Homo sapiens (Human).